We begin with the raw amino-acid sequence, 358 residues long: UDP-3-O-acylglucosamine N-acyltransferase (358 aa).

Histidine 252 acts as the Proton acceptor in catalysis.

Belongs to the transferase hexapeptide repeat family. LpxD subfamily. Homotrimer.

It catalyses the reaction a UDP-3-O-[(3R)-3-hydroxyacyl]-alpha-D-glucosamine + a (3R)-hydroxyacyl-[ACP] = a UDP-2-N,3-O-bis[(3R)-3-hydroxyacyl]-alpha-D-glucosamine + holo-[ACP] + H(+). The protein operates within bacterial outer membrane biogenesis; LPS lipid A biosynthesis. In terms of biological role, catalyzes the N-acylation of UDP-3-O-acylglucosamine using 3-hydroxyacyl-ACP as the acyl donor. Is involved in the biosynthesis of lipid A, a phosphorylated glycolipid that anchors the lipopolysaccharide to the outer membrane of the cell. The polypeptide is UDP-3-O-acylglucosamine N-acyltransferase (Paraburkholderia phymatum (strain DSM 17167 / CIP 108236 / LMG 21445 / STM815) (Burkholderia phymatum)).